The primary structure comprises 235 residues: 2-C-methyl-D-erythritol 4-phosphate cytidylyltransferase (235 aa).

Belongs to the IspD/TarI cytidylyltransferase family. IspD subfamily.

The catalysed reaction is 2-C-methyl-D-erythritol 4-phosphate + CTP + H(+) = 4-CDP-2-C-methyl-D-erythritol + diphosphate. It participates in isoprenoid biosynthesis; isopentenyl diphosphate biosynthesis via DXP pathway; isopentenyl diphosphate from 1-deoxy-D-xylulose 5-phosphate: step 2/6. Catalyzes the formation of 4-diphosphocytidyl-2-C-methyl-D-erythritol from CTP and 2-C-methyl-D-erythritol 4-phosphate (MEP). The polypeptide is 2-C-methyl-D-erythritol 4-phosphate cytidylyltransferase (Synechococcus sp. (strain JA-3-3Ab) (Cyanobacteria bacterium Yellowstone A-Prime)).